Consider the following 188-residue polypeptide: Protein GrpE (188 aa).

The interval 1–22 (MADEQTLDTQNLDANQAPEASG) is disordered.

The protein belongs to the GrpE family. In terms of assembly, homodimer.

It localises to the cytoplasm. Its function is as follows. Participates actively in the response to hyperosmotic and heat shock by preventing the aggregation of stress-denatured proteins, in association with DnaK and GrpE. It is the nucleotide exchange factor for DnaK and may function as a thermosensor. Unfolded proteins bind initially to DnaJ; upon interaction with the DnaJ-bound protein, DnaK hydrolyzes its bound ATP, resulting in the formation of a stable complex. GrpE releases ADP from DnaK; ATP binding to DnaK triggers the release of the substrate protein, thus completing the reaction cycle. Several rounds of ATP-dependent interactions between DnaJ, DnaK and GrpE are required for fully efficient folding. The chain is Protein GrpE from Pseudomonas fluorescens (strain ATCC BAA-477 / NRRL B-23932 / Pf-5).